The following is a 1068-amino-acid chain: Protein AF-10 (1068 aa).

A PHD-type 1 zinc finger spans residues 22–74 (IGGCCVCSDERGWAENPLVYCDGHGCSVAVHQACYGIVQVPTGPWFCRKCESQ). Residues 79–112 (RVRCELCPHKDGALKRTDNGGWAHVVCALYIPEV) form a C2HC pre-PHD-type zinc finger. Residues 106–190 (ALYIPEVQFA…EGNGADNVQY (85 aa)) are required for interaction with histone H3. The PHD-type 2 zinc finger occupies 135-198 (KTCYICDEQG…QYCGYCKYHF (64 aa)). The tract at residues 207–260 (GSNRSYEQSLSDSSSHSQDKHHEKEKKKYKEKDKHKQKHKKQPEPSPALVPSLT) is disordered. S217 bears the Phosphoserine mark. Positions 223-240 (SQDKHHEKEKKKYKEKDK) are enriched in basic and acidic residues. S252 is modified (phosphoserine). A Glycyl lysine isopeptide (Lys-Gly) (interchain with G-Cter in SUMO2) cross-link involves residue K280. The span at 296–305 (EVSAHTSSGK) shows a compositional bias: polar residues. Disordered stretches follow at residues 296–416 (EVSA…SFSS) and 428–506 (SQPK…SVAS). Residues 306–317 (DVSEARGSEGKG) show a composition bias toward basic and acidic residues. The segment covering 340–351 (TAVSASSPFPQG) has biased composition (polar residues). Residues 352–372 (SFSGTPGSVKSSSGSSVQSPQ) are compositionally biased toward low complexity. Composition is skewed to polar residues over residues 387 to 396 (YTHTQQPSST), 404 to 416 (SGSQEAAVNSFSS), and 428 to 446 (SQPKSFDNSPGELGSSSLP). S436 is subject to Phosphoserine. Basic residues predominate over residues 465–483 (EKKRKGNKQSKHGPGRPKG). Residues 490–506 (VSHLSVSSASPTSSVAS) show a composition bias toward low complexity. A Phosphoserine modification is found at S532. Residues 583-594 (SGSGSSTPVSSS) show a composition bias toward low complexity. 2 disordered regions span residues 583–613 (SGSGSSTPVSSSHIPQQSSGHLQQVGALSPS) and 660–698 (SESSQTDQDLGDNARSLGGRGSSPRGSLSPRSPVSNLQL). Polar residues predominate over residues 595–604 (HIPQQSSGHL). Positions 681-692 (SSPRGSLSPRSP) are enriched in low complexity. Residues S686, S688, and S691 each carry the phosphoserine modification. Positions 752–780 (LQVENRRLEEQIKNLTAKKERLQLLNAQL) are leucine-zipper. 2 disordered regions span residues 786 to 869 (AITT…VSGV) and 1040 to 1068 (PFLTIHGDSTSQKVTRLSDKTGPVAQEKS). The span at 787–816 (ITTNPSPSHQMHTYTAQTAPPPDSLNSSKS) shows a compositional bias: polar residues. Low complexity-rich tracts occupy residues 836-850 (LTSSGQSTSSSSALS) and 857-869 (QSPAQQSSGVSGV). Residues 1040 to 1054 (PFLTIHGDSTSQKVT) are compositionally biased toward polar residues.

Self-associates. Interacts with FSTL3; the interaction enhances MLLT10 in vitro transcriptional activity and self-association. Interacts with YEATS4. Interacts with SS18. Interacts with DOT1L. Interacts with histone H3; interaction is necessary for MLLT10 binding to nucleosomes; interaction is inhibited by histone H3 'Lys-27' methylations (H3K27me1, H3K27me2 and H3K27me3) amd acetylation; interaction stabilizes association of MLLT10 at chromatin; interaction is essential for histone H3 'Lys-79' dimethylation (H3K79me2).

The protein resides in the nucleus. Probably involved in transcriptional regulation. Binds to cruciform DNA. In cells, binding to unmodified histone H3 regulates DOT1L functions including histone H3 'Lys-79' dimethylation (H3K79me2) and gene activation. The protein is Protein AF-10 of Mus musculus (Mouse).